Reading from the N-terminus, the 311-residue chain is Pyrimidine-specific ribonucleoside hydrolase RihA (311 aa).

The active site involves His-240.

It belongs to the IUNH family. RihA subfamily.

Functionally, hydrolyzes cytidine or uridine to ribose and cytosine or uracil, respectively. The chain is Pyrimidine-specific ribonucleoside hydrolase RihA from Salmonella dublin (strain CT_02021853).